The sequence spans 243 residues: Carboxy-S-adenosyl-L-methionine synthase (243 aa).

Residues Tyr35, 68–70 (GCS), 92–93 (DN), and Arg199 contribute to the S-adenosyl-L-methionine site.

Belongs to the class I-like SAM-binding methyltransferase superfamily. Cx-SAM synthase family. In terms of assembly, homodimer.

It carries out the reaction prephenate + S-adenosyl-L-methionine = carboxy-S-adenosyl-L-methionine + 3-phenylpyruvate + H2O. Functionally, catalyzes the conversion of S-adenosyl-L-methionine (SAM) to carboxy-S-adenosyl-L-methionine (Cx-SAM). This Helicobacter pylori (strain J99 / ATCC 700824) (Campylobacter pylori J99) protein is Carboxy-S-adenosyl-L-methionine synthase.